Consider the following 484-residue polypeptide: Ribosomal RNA small subunit methyltransferase F (484 aa).

S-adenosyl-L-methionine is bound by residues 126 to 132, E150, D177, and D195; that span reads AAAPGSK. The active-site Nucleophile is C248.

The protein belongs to the class I-like SAM-binding methyltransferase superfamily. RsmB/NOP family.

The protein localises to the cytoplasm. It catalyses the reaction cytidine(1407) in 16S rRNA + S-adenosyl-L-methionine = 5-methylcytidine(1407) in 16S rRNA + S-adenosyl-L-homocysteine + H(+). In terms of biological role, specifically methylates the cytosine at position 1407 (m5C1407) of 16S rRNA. The protein is Ribosomal RNA small subunit methyltransferase F of Pectobacterium atrosepticum (strain SCRI 1043 / ATCC BAA-672) (Erwinia carotovora subsp. atroseptica).